Consider the following 130-residue polypeptide: Large ribosomal subunit protein bL12 (130 aa).

This sequence belongs to the bacterial ribosomal protein bL12 family. In terms of assembly, homodimer. Part of the ribosomal stalk of the 50S ribosomal subunit. Forms a multimeric L10(L12)X complex, where L10 forms an elongated spine to which 2 to 4 L12 dimers bind in a sequential fashion. Binds GTP-bound translation factors.

Forms part of the ribosomal stalk which helps the ribosome interact with GTP-bound translation factors. Is thus essential for accurate translation. This is Large ribosomal subunit protein bL12 from Herpetosiphon aurantiacus (strain ATCC 23779 / DSM 785 / 114-95).